Consider the following 297-residue polypeptide: Mitochondrial ornithine transporter 1 (297 aa).

Solcar repeat units follow at residues 15 to 97, 102 to 205, and 212 to 292; these read GSPA…LKLT, DPTL…FKKN, and KPHF…FRET. 6 helical membrane-spanning segments follow: residues 18–38, 72–91, 107–127, 184–204, 215–235, and 264–285; these read ASTFSAALVSSAISNVIGYPL, GLTLPLISATLSRSVSFTVY, YFISGLGTGTFISLFACPFEY, HLTRDALGSACYFTIYETFKK, FAYAFSGAFCGALSWILVFPV, and IYRGIGISLMRSALINSCNFTL.

This sequence belongs to the mitochondrial carrier (TC 2.A.29) family.

It is found in the mitochondrion inner membrane. In terms of biological role, required for arginine biosynthesis. Transports ornithine synthesized from glutamate in the mitochondrial matrix to the cytosol, where it is converted to arginine. This Schizosaccharomyces pombe (strain 972 / ATCC 24843) (Fission yeast) protein is Mitochondrial ornithine transporter 1.